Reading from the N-terminus, the 291-residue chain is MVRYPAVAGSFYPADEELVLMLERFFSDLGEEGNDRRITAGVAPHAGYIFSGYTASRTYKAIFEDGLPETFVILGPNHTGLGSPIAVHPPGTWITPLGEIEVDGELAREIAKISGIADLDDLAHKYEHSIEVQVPFIQYLAEKAGKEVKIVPITLGIQDEDVAEDLGRAIFEASRELGKDVVVIASTDFMHYGQIYGYVPFRARADELPHRIKEWDFRIIRRILDFDVRGMFEEIREMNHTMCGPGGVGTAIVYSRLAGAVEAELLHYTTSFEVSRSTEAVVGYASIVFRR.

Belongs to the MEMO1 family.

The chain is MEMO1 family protein TK1477 from Thermococcus kodakarensis (strain ATCC BAA-918 / JCM 12380 / KOD1) (Pyrococcus kodakaraensis (strain KOD1)).